Here is a 118-residue protein sequence, read N- to C-terminus: UPF0449 protein C19orf25 (118 aa).

Tyr-63 is modified (phosphotyrosine). Positions 81 to 109 (NVLRQRCELLQRAGEDLEREVAQMKQAAL) form a coiled coil.

The protein belongs to the UPF0449 family.

The sequence is that of UPF0449 protein C19orf25 (C19orf25) from Homo sapiens (Human).